A 433-amino-acid chain; its full sequence is Probable mannose-6-phosphate isomerase (433 aa).

Zn(2+)-binding residues include Gln103, His105, Glu130, and His277. Residue Arg296 is part of the active site.

This sequence belongs to the mannose-6-phosphate isomerase type 1 family. It depends on Zn(2+) as a cofactor.

The protein resides in the cytoplasm. The catalysed reaction is D-mannose 6-phosphate = D-fructose 6-phosphate. Its pathway is nucleotide-sugar biosynthesis; GDP-alpha-D-mannose biosynthesis; alpha-D-mannose 1-phosphate from D-fructose 6-phosphate: step 1/2. Functionally, involved in the synthesis of the GDP-mannose and dolichol-phosphate-mannose required for a number of critical mannosyl transfer reactions. This is Probable mannose-6-phosphate isomerase (PMIH) from Echinococcus multilocularis (Fox tapeworm).